Here is a 251-residue protein sequence, read N- to C-terminus: Imidazole glycerol phosphate synthase subunit HisF (251 aa).

Catalysis depends on residues aspartate 11 and aspartate 130.

It belongs to the HisA/HisF family. In terms of assembly, heterodimer of HisH and HisF.

It localises to the cytoplasm. The enzyme catalyses 5-[(5-phospho-1-deoxy-D-ribulos-1-ylimino)methylamino]-1-(5-phospho-beta-D-ribosyl)imidazole-4-carboxamide + L-glutamine = D-erythro-1-(imidazol-4-yl)glycerol 3-phosphate + 5-amino-1-(5-phospho-beta-D-ribosyl)imidazole-4-carboxamide + L-glutamate + H(+). The protein operates within amino-acid biosynthesis; L-histidine biosynthesis; L-histidine from 5-phospho-alpha-D-ribose 1-diphosphate: step 5/9. In terms of biological role, IGPS catalyzes the conversion of PRFAR and glutamine to IGP, AICAR and glutamate. The HisF subunit catalyzes the cyclization activity that produces IGP and AICAR from PRFAR using the ammonia provided by the HisH subunit. This Pelodictyon phaeoclathratiforme (strain DSM 5477 / BU-1) protein is Imidazole glycerol phosphate synthase subunit HisF.